Here is a 165-residue protein sequence, read N- to C-terminus: Chorismate pyruvate-lyase (165 aa).

Substrate is bound by residues M35, R77, L115, and E156.

This sequence belongs to the UbiC family. In terms of assembly, monomer.

Its subcellular location is the cytoplasm. It carries out the reaction chorismate = 4-hydroxybenzoate + pyruvate. It functions in the pathway cofactor biosynthesis; ubiquinone biosynthesis. Functionally, removes the pyruvyl group from chorismate, with concomitant aromatization of the ring, to provide 4-hydroxybenzoate (4HB) for the ubiquinone pathway. This Escherichia coli (strain K12 / MC4100 / BW2952) protein is Chorismate pyruvate-lyase.